The chain runs to 246 residues: Small ribosomal subunit protein uS2 (246 aa).

The tract at residues 224–246 is disordered; that stretch reads AKQGEEEAEAAEETAPETETTTA. Positions 229–239 are enriched in acidic residues; that stretch reads EEAEAAEETAP.

It belongs to the universal ribosomal protein uS2 family.

This chain is Small ribosomal subunit protein uS2, found in Bacillus velezensis (strain DSM 23117 / BGSC 10A6 / LMG 26770 / FZB42) (Bacillus amyloliquefaciens subsp. plantarum).